The following is a 182-amino-acid chain: HGPRTase-like protein 1 (182 aa).

Belongs to the purine/pyrimidine phosphoribosyltransferase family. Archaeal HPRT subfamily.

Functionally, may catalyze a purine salvage reaction, the substrate is unknown. The sequence is that of HGPRTase-like protein 1 from Haloarcula marismortui (strain ATCC 43049 / DSM 3752 / JCM 8966 / VKM B-1809) (Halobacterium marismortui).